Consider the following 556-residue polypeptide: Genetic interactor of prohibitins 3, mitochondrial (556 aa).

The N-terminal 21 residues, 1-21, are a transit peptide targeting the mitochondrion; sequence MLNLCHALRGVRQFSCSVIVK. Residues 113–305 enclose the CP-type G domain; sequence ESTLNDILNY…LFDLPGYSTS (193 aa).

It belongs to the TRAFAC class YlqF/YawG GTPase family. GEP3 subfamily.

It localises to the mitochondrion. Its function is as follows. Interacts genetically with prohibitins and thus may be involved in the mitochondrial lipid metabolism. This chain is Genetic interactor of prohibitins 3, mitochondrial (GEP3), found in Saccharomyces cerevisiae (strain Zymaflore VL3) (Baker's yeast).